Consider the following 429-residue polypeptide: 4-hydroxyphenylacetate degradation bifunctional isomerase/decarboxylase (429 aa).

Approximate repeat units lie at residues methionine 1–phenylalanine 215 and threonine 216–asparagine 429. The a divalent metal cation site is built by glutamate 276, glutamate 278, and aspartate 307.

It belongs to the FAH family. Monomer. It depends on Mg(2+) as a cofactor.

The enzyme catalyses (2E,4Z)-5-hydroxypenta-2,4-diene-1,2,5-tricarboxylate = (3E,5R)-5-carboxy-2-oxohept-3-enedioate. It catalyses the reaction (3E,5R)-5-carboxy-2-oxohept-3-enedioate + H(+) = (4Z)-2-oxohept-4-enedioate + CO2. It participates in aromatic compound metabolism; 4-hydroxyphenylacetate degradation; pyruvate and succinate semialdehyde from 4-hydroxyphenylacetate: step 4/7. Its pathway is aromatic compound metabolism; 4-hydroxyphenylacetate degradation; pyruvate and succinate semialdehyde from 4-hydroxyphenylacetate: step 5/7. Its function is as follows. Decarboxylates OPET (5-oxo-pent-3-ene-1,2,5-tricarboxylic acid) into HHDD (2-hydroxy-hept-2,4-diene-1,7-dioate) and isomerizes it to OHED (2-oxo-hept-3-ene-1,7-dioate). In Salmonella dublin, this protein is 4-hydroxyphenylacetate degradation bifunctional isomerase/decarboxylase (hpaG).